The following is a 626-amino-acid chain: Colicin-Ia (626 aa).

The translocation (T) stretch occupies residues 23 to 225; sequence EIMAVDIYVN…TRLSELEKNG (203 aa). A compositionally biased stretch (polar residues) spans 276 to 286; the sequence is QQLTQQKNTPD. Residues 276 to 308 are disordered; sequence QQLTQQKNTPDGKTIVSPEKFPGRSSTNHSIVV. The interval 282–385 is receptor-binding (R); sequence KNTPDGKTIV…LRQRLLDARN (104 aa). Residues 450 to 626 form a channel (C) region; that stretch reads KDAINFTTEF…VEKANKFWGI (177 aa). Helical transmembrane passes span 580–594 and 597–612; these read ATAL…LTGS and GIIG…GALI.

The protein belongs to the channel forming colicin family.

It is found in the cell membrane. Functionally, this colicin is a channel-forming colicin. This class of transmembrane toxins depolarize the cytoplasmic membrane, leading to dissipation of cellular energy. Colicins are polypeptide toxins produced by and active against E.coli and closely related bacteria. In Escherichia coli, this protein is Colicin-Ia (cia).